Reading from the N-terminus, the 226-residue chain is Low-molecular weight cobalt-containing nitrile hydratase subunit beta (226 aa).

Residues 1–22 (MDGIHDLGGRAGLGPIKPESDE) form a disordered region.

It belongs to the nitrile hydratase subunit beta family. Heterodimer of an alpha and a beta chain.

The catalysed reaction is an aliphatic primary amide = an aliphatic nitrile + H2O. Its function is as follows. NHase catalyzes the hydration of various nitrile compounds to the corresponding amides. The protein is Low-molecular weight cobalt-containing nitrile hydratase subunit beta of Rhodococcus rhodochrous.